The chain runs to 227 residues: Phosphoribosylformylglycinamidine synthase subunit PurQ (227 aa).

The Glutamine amidotransferase type-1 domain occupies 3-225; sequence FAVIVFPGSN…LKQWRETYVV (223 aa). Cysteine 86 serves as the catalytic Nucleophile. Residues histidine 194 and glutamate 196 contribute to the active site.

In terms of assembly, part of the FGAM synthase complex composed of 1 PurL, 1 PurQ and 2 PurS subunits.

Its subcellular location is the cytoplasm. It catalyses the reaction N(2)-formyl-N(1)-(5-phospho-beta-D-ribosyl)glycinamide + L-glutamine + ATP + H2O = 2-formamido-N(1)-(5-O-phospho-beta-D-ribosyl)acetamidine + L-glutamate + ADP + phosphate + H(+). The enzyme catalyses L-glutamine + H2O = L-glutamate + NH4(+). It participates in purine metabolism; IMP biosynthesis via de novo pathway; 5-amino-1-(5-phospho-D-ribosyl)imidazole from N(2)-formyl-N(1)-(5-phospho-D-ribosyl)glycinamide: step 1/2. Its function is as follows. Part of the phosphoribosylformylglycinamidine synthase complex involved in the purines biosynthetic pathway. Catalyzes the ATP-dependent conversion of formylglycinamide ribonucleotide (FGAR) and glutamine to yield formylglycinamidine ribonucleotide (FGAM) and glutamate. The FGAM synthase complex is composed of three subunits. PurQ produces an ammonia molecule by converting glutamine to glutamate. PurL transfers the ammonia molecule to FGAR to form FGAM in an ATP-dependent manner. PurS interacts with PurQ and PurL and is thought to assist in the transfer of the ammonia molecule from PurQ to PurL. The protein is Phosphoribosylformylglycinamidine synthase subunit PurQ of Bacillus anthracis (strain A0248).